The following is a 202-amino-acid chain: MLVWIDCEMTGLDLAHDGLIEVAALVTDGQLNVQGEGVDVIIKPEPQWLDHMNDFVRNMHTTSGLLAELDKGLTMAQAQDQVLDYIRTYVPQAGKAPLAGNTIGTDRSFLAKDMPKLESYVHYRNVDVSSIKELARRWYPRAFGHSPEKQGNHRALADIQESIEELMYWREVLMVPSPGPETTRCDEIAAKYQGFLTGAGRD.

One can recognise an Exonuclease domain in the interval 2-166; sequence LVWIDCEMTG…ADIQESIEEL (165 aa). Y123 is an active-site residue.

The protein belongs to the oligoribonuclease family.

The protein resides in the cytoplasm. In terms of biological role, 3'-to-5' exoribonuclease specific for small oligoribonucleotides. This Cutibacterium acnes (strain DSM 16379 / KPA171202) (Propionibacterium acnes) protein is Oligoribonuclease.